The primary structure comprises 102 residues: uncharacterized protein (102 aa).

This is an uncharacterized protein from Sulfolobus islandicus rod-shaped virus 1 (SIRV-1).